Consider the following 1131-residue polypeptide: Kinesin-like protein CG14535 (1131 aa).

The span at 1–11 shows a compositional bias: polar residues; sequence MATTSTSNMSR. The interval 1–25 is disordered; sequence MATTSTSNMSRNGGFCGALQRAPPP. The region spanning 44–396 is the Kinesin motor domain; the sequence is KVKVMLRVAD…IQIASRIHRL (353 aa). 4 disordered regions span residues 472-494, 693-753, 905-926, and 1016-1072; these read ALKGSGLEKPPSKSASNSPMMMK, DLPD…SRDI, PAYRLTPSPPKQPSHSPSQGSL, and TSSE…QRHR. Over residues 483 to 494 the composition is skewed to low complexity; sequence SKSASNSPMMMK. The span at 1016–1032 shows a compositional bias: polar residues; the sequence is TSSEAYDSGHDSNSTPR.

This sequence belongs to the TRAFAC class myosin-kinesin ATPase superfamily. Kinesin family. KIF26 subfamily.

It localises to the cytoplasm. It is found in the cytoskeleton. The polypeptide is Kinesin-like protein CG14535 (Drosophila melanogaster (Fruit fly)).